Here is a 656-residue protein sequence, read N- to C-terminus: Rab proteins geranylgeranyltransferase component A 2 (656 aa).

2 disordered regions span residues 188–209 and 609–656; these read MHTV…EDKA and PPPN…HLQN. A compositionally biased stretch (basic and acidic residues) spans 639–656; that stretch reads ESSEESKNLESPEKHLQN. S649 is modified (phosphoserine).

It belongs to the Rab GDI family. In terms of assembly, monomer. Heterotrimer composed of RABGGTA, RABGGTB and CHML; within this trimer, RABGGTA and RABGGTB form the catalytic component B, while CHML (component A) mediates Rab protein binding. Interacts with RAB1A, RAB7A and RAB27A, but has much lower affinity for RAB1A, RAB7A and RAB27A than CHM. Interacts with the non-phosphorylated forms of RAB3A, RAB3B, RAB3C, RAB3D, RAB5B, RAB5C, RAB8A, RAB8B, RAB10, RAB12, RAB35, and RAB43.

Its subcellular location is the cytoplasm. The protein resides in the cytosol. Substrate-binding subunit (component A) of the Rab geranylgeranyltransferase (GGTase) complex. Binds unprenylated Rab proteins and presents the substrate peptide to the catalytic component B. The component A is thought to be regenerated by transferring its prenylated Rab back to the donor membrane. Less effective than CHM in supporting prenylation of Rab3 family. This is Rab proteins geranylgeranyltransferase component A 2 (CHML) from Homo sapiens (Human).